Reading from the N-terminus, the 285-residue chain is MDMTLPIALLIDLMFGEPPAIIHPVVGFGKVIEFFDNKYRRRSPYLDFLVGAISSLVVIGLAFILSHLPNFLPNPFNLILSIYLLKSSFAIRSLHDHVKRTITPDLEEKRRAVSMIVSRDTKSLDEPHLNSAAIESLSENINDSVIAPLFYYLIFGLPGAVVYRAVNTLDAMIGYRNEKYEYFGKFAARLDDLLNFVPARITVLLFLSLGGRKVIRYYRMAKYKINSDKPIAAMSAVLGVWLEKPNYYKFPGRRPENEDIKRALKVYWIIVVEFLLIVAIILYGG.

4 helical membrane passes run 10–32 (LIDLMFGEPPAIIHPVVGFGKVI), 45–67 (YLDFLVGAISSLVVIGLAFILSH), 145–167 (VIAPLFYYLIFGLPGAVVYRAVN), and 266–283 (VYWIIVVEFLLIVAIILY).

Belongs to the CobD/CbiB family.

The protein localises to the cell membrane. It functions in the pathway cofactor biosynthesis; adenosylcobalamin biosynthesis. In terms of biological role, converts cobyric acid to cobinamide by the addition of aminopropanol on the F carboxylic group. This chain is Probable cobalamin biosynthesis protein CobD, found in Pyrococcus furiosus (strain ATCC 43587 / DSM 3638 / JCM 8422 / Vc1).